A 245-amino-acid chain; its full sequence is Probable phosphatase YcdX (245 aa).

Positions 7, 9, 15, 40, 73, 101, 131, 192, and 194 each coordinate Zn(2+).

It belongs to the PHP family. In terms of assembly, homotrimer. The cofactor is Zn(2+).

This is Probable phosphatase YcdX from Escherichia coli O17:K52:H18 (strain UMN026 / ExPEC).